Reading from the N-terminus, the 122-residue chain is UPF0102 protein BARBAKC583_1042 (122 aa).

This sequence belongs to the UPF0102 family.

This is UPF0102 protein BARBAKC583_1042 from Bartonella bacilliformis (strain ATCC 35685 / KC583 / Herrer 020/F12,63).